The chain runs to 251 residues: Ubiquinone/menaquinone biosynthesis C-methyltransferase UbiE (251 aa).

S-adenosyl-L-methionine is bound by residues Thr-74, Asp-95, 123–124 (NA), and Ser-140.

This sequence belongs to the class I-like SAM-binding methyltransferase superfamily. MenG/UbiE family.

The catalysed reaction is a 2-demethylmenaquinol + S-adenosyl-L-methionine = a menaquinol + S-adenosyl-L-homocysteine + H(+). It catalyses the reaction a 2-methoxy-6-(all-trans-polyprenyl)benzene-1,4-diol + S-adenosyl-L-methionine = a 5-methoxy-2-methyl-3-(all-trans-polyprenyl)benzene-1,4-diol + S-adenosyl-L-homocysteine + H(+). It functions in the pathway quinol/quinone metabolism; menaquinone biosynthesis; menaquinol from 1,4-dihydroxy-2-naphthoate: step 2/2. It participates in cofactor biosynthesis; ubiquinone biosynthesis. Functionally, methyltransferase required for the conversion of demethylmenaquinol (DMKH2) to menaquinol (MKH2) and the conversion of 2-polyprenyl-6-methoxy-1,4-benzoquinol (DDMQH2) to 2-polyprenyl-3-methyl-6-methoxy-1,4-benzoquinol (DMQH2). The chain is Ubiquinone/menaquinone biosynthesis C-methyltransferase UbiE from Escherichia coli O1:K1 / APEC.